Consider the following 468-residue polypeptide: 3-isopropylmalate dehydratase large subunit (468 aa).

[4Fe-4S] cluster contacts are provided by Cys-347, Cys-408, and Cys-411.

Belongs to the aconitase/IPM isomerase family. LeuC type 1 subfamily. In terms of assembly, heterodimer of LeuC and LeuD. It depends on [4Fe-4S] cluster as a cofactor.

The enzyme catalyses (2R,3S)-3-isopropylmalate = (2S)-2-isopropylmalate. The protein operates within amino-acid biosynthesis; L-leucine biosynthesis; L-leucine from 3-methyl-2-oxobutanoate: step 2/4. Its function is as follows. Catalyzes the isomerization between 2-isopropylmalate and 3-isopropylmalate, via the formation of 2-isopropylmaleate. This chain is 3-isopropylmalate dehydratase large subunit, found in Methylobacillus flagellatus (strain ATCC 51484 / DSM 6875 / VKM B-1610 / KT).